We begin with the raw amino-acid sequence, 340 residues long: Heat-inducible transcription repressor HrcA (340 aa).

It belongs to the HrcA family.

Functionally, negative regulator of class I heat shock genes (grpE-dnaK-dnaJ and groELS operons). Prevents heat-shock induction of these operons. In Burkholderia cenocepacia (strain HI2424), this protein is Heat-inducible transcription repressor HrcA.